The sequence spans 44 residues: Cytochrome b559 subunit beta (44 aa).

Residues 19–35 (WLSVHALGVPSVFFLGA) traverse the membrane as a helical segment. H23 is a binding site for heme.

Belongs to the PsbE/PsbF family. Heterodimer of an alpha subunit and a beta subunit. PSII is composed of 1 copy each of membrane proteins PsbA, PsbB, PsbC, PsbD, PsbE, PsbF, PsbH, PsbI, PsbJ, PsbK, PsbL, PsbM, PsbT, PsbX, PsbY, PsbZ, Psb30/Ycf12, peripheral proteins PsbO, CyanoQ (PsbQ), PsbU, PsbV and a large number of cofactors. It forms dimeric complexes. The cofactor is heme b.

The protein resides in the cellular thylakoid membrane. This b-type cytochrome is tightly associated with the reaction center of photosystem II (PSII). PSII is a light-driven water:plastoquinone oxidoreductase that uses light energy to abstract electrons from H(2)O, generating O(2) and a proton gradient subsequently used for ATP formation. It consists of a core antenna complex that captures photons, and an electron transfer chain that converts photonic excitation into a charge separation. This Synechococcus elongatus (strain ATCC 33912 / PCC 7942 / FACHB-805) (Anacystis nidulans R2) protein is Cytochrome b559 subunit beta.